The following is a 138-amino-acid chain: Large ribosomal subunit protein uL16 (138 aa).

Positions 1–13 (MLQPARRKFRKEQ) are enriched in basic residues. A disordered region spans residues 1-22 (MLQPARRKFRKEQKGRNTGVAT).

It belongs to the universal ribosomal protein uL16 family. Part of the 50S ribosomal subunit.

Its function is as follows. Binds 23S rRNA and is also seen to make contacts with the A and possibly P site tRNAs. This is Large ribosomal subunit protein uL16 from Acidovorax ebreus (strain TPSY) (Diaphorobacter sp. (strain TPSY)).